The sequence spans 385 residues: Cytochrome b (385 aa).

The next 4 helical transmembrane spans lie at 32-52, 76-98, 113-133, and 179-199; these read FGSLLALCLVIQLATGITLAM, WFIRYAHANTASFFFICIYAHMG, PWSIGVIIFLLLIITAFMGYV, and FFALHYLMPFVLAVFALLHLI. Heme b is bound by residues His-82 and His-96. His-183 and His-197 together coordinate heme b. His-202 provides a ligand contact to a ubiquinone. A run of 4 helical transmembrane segments spans residues 225–245, 289–309, 321–341, and 348–368; these read YSFKDLITVFAFLLMFTLFVF, LGGVIAMVAAILILLILPIVD, ISKLLFGFFICNFLLLGVLGQ, and FIVLGQICTIFYFSYFLILLP.

Belongs to the cytochrome b family. As to quaternary structure, fungal cytochrome b-c1 complex contains 10 subunits; 3 respiratory subunits, 2 core proteins and 5 low-molecular weight proteins. Cytochrome b-c1 complex is a homodimer. Requires heme b as cofactor.

The protein resides in the mitochondrion inner membrane. In terms of biological role, component of the ubiquinol-cytochrome c reductase complex (complex III or cytochrome b-c1 complex) that is part of the mitochondrial respiratory chain. The b-c1 complex mediates electron transfer from ubiquinol to cytochrome c. Contributes to the generation of a proton gradient across the mitochondrial membrane that is then used for ATP synthesis. This is Cytochrome b (COB) from Yarrowia lipolytica (strain CLIB 122 / E 150) (Yeast).